We begin with the raw amino-acid sequence, 550 residues long: MNQGHPQPDMYYSPHYSTPQYGYGYSTNGAPTTAVSTPMPAPQNVLPVPSALSNQGAMQQPGYSNSSNNGAFDTTGQHNPPGMKPRVTATLWEDEGSLCFQVEARGICVARREDNHMINGTKLLNVAGMTRGRRDGILKSEKVRHVVKIGPMHLKGVWIPYDRALDFANKEKITELLFPLFVHNIGALLYHPSNSNRTSQVMAAAERRKHEGLGGQRPAAPNALPSIGQHHPMMPGLPTGGYVPQSLANGPQSLASTPQPLTNGSQPPMPNGGGMLKRGREEEEDLHRPVSNGHDPMSNMHAMSNGYPQQPPLANVHQPPMQNGGDMLKRGRDEDDEVHRSAHTAHDTMNNMPGSMPGLSNAYAQPLPNVHHQPLANGDGGMLKRGRDEDDDVHRSSPNGHDSAGNFEVKRRKTITSNDSMVSPGGFYTLHNGYGQPGVMNGMSPYKRRDDEAETPRPGPNVHDHLNNFDLKRHKTMETSVPAPQYDAMNRPHSSIGTSPTYAPAPVYDNLARPASTVAASPSYPSAPVYDTGARPPSAISAPRRQQSFG.

In terms of domain architecture, HTH APSES-type spans 86–192 (RVTATLWEDE…HNIGALLYHP (107 aa)). Positions 120 to 141 (GTKLLNVAGMTRGRRDGILKSE) form a DNA-binding region, H-T-H motif. Polar residues predominate over residues 246 to 266 (SLANGPQSLASTPQPLTNGSQ). 4 disordered regions span residues 246-277 (SLANGPQSLASTPQPLTNGSQPPMPNGGGMLK), 371-412 (HHQP…VKRR), 447-467 (KRRDDEAETPRPGPNVHDHLN), and 527-550 (APVYDTGARPPSAISAPRRQQSFG). Positions 385 to 395 (RGRDEDDDVHR) are enriched in basic and acidic residues. Residues 517–546 (TVAASPSYPSAPVYDTGARPPSAISAPRRQ) form a nuclear localization domain region.

The protein belongs to the EFG1/PHD1/stuA family.

It localises to the nucleus. In terms of biological role, transcription factor that regulates asexual reproduction. Binds the StuA-response elements (StRE) with the consensus sequence 5'-(A/T)CGCG(T/A)N(A/C)-3' at the promoters of target genes. Differentially regulates the development of macroconidia, microconidia, and chlamydospores. Acts as a positive regulator for the development of macroconidia and as a negative regulator for the development of chlamydospores. Involved in microconidium formation specifically in infected plants. In Fusarium oxysporum (Fusarium vascular wilt), this protein is Cell pattern formation-associated protein STUA.